The following is a 463-amino-acid chain: Pentatricopeptide repeat-containing protein At2g17670 (463 aa).

Residues 1 to 63 (MGKVPSSFRS…PSLRNPFKSP (63 aa)) form a disordered region. 9 PPR repeats span residues 121 to 157 (GRST…GLEP), 158 to 192 (DQVT…HSPP), 193 to 223 (DTYT…MRDD), 229 to 263 (DLVS…GFKP), 264 to 298 (DCFL…GVEP), 299 to 333 (DQIT…GYEP), 334 to 368 (DTAT…GCAP), 369 to 403 (NDCT…GVKL), and 404 to 438 (ESNG…KSLS).

It belongs to the PPR family. P subfamily.

The protein is Pentatricopeptide repeat-containing protein At2g17670 of Arabidopsis thaliana (Mouse-ear cress).